Here is a 158-residue protein sequence, read N- to C-terminus: Ribosome maturation factor RimP (158 aa).

Belongs to the RimP family.

The protein localises to the cytoplasm. Functionally, required for maturation of 30S ribosomal subunits. This chain is Ribosome maturation factor RimP, found in Deinococcus radiodurans (strain ATCC 13939 / DSM 20539 / JCM 16871 / CCUG 27074 / LMG 4051 / NBRC 15346 / NCIMB 9279 / VKM B-1422 / R1).